Reading from the N-terminus, the 239-residue chain is Tumor protein p53-inducible nuclear protein 1 (239 aa).

An LIR motif is present at residues 25 to 37 (EKEDDEWILVDFI).

As to quaternary structure, interacts with p53/TP53 and HIPK2. Interacts with PRKCG, GABARAP, GABARAPL1, GABARAPL2, MAP1LC3A, MAP1LC3B and MAP1LC3C. As to expression, ubiquitously expressed with highest levels in the thymus.

It is found in the cytoplasm. Its subcellular location is the cytosol. The protein localises to the nucleus. It localises to the PML body. The protein resides in the cytoplasmic vesicle. It is found in the autophagosome. In terms of biological role, antiproliferative and proapoptotic protein involved in cell stress response which acts as a dual regulator of transcription and autophagy. Acts as a positive regulator of autophagy. In response to cellular stress or activation of autophagy, relocates to autophagosomes where it interacts with autophagosome-associated proteins GABARAP, GABARAPL1/L2, MAP1LC3A/B/C and regulates autophagy. Acts as an antioxidant and plays a major role in p53/TP53-driven oxidative stress response. Possesses both a p53/TP53-independent intracellular reactive oxygen species (ROS) regulatory function and a p53/TP53-dependent transcription regulatory function. Positively regulates p53/TP53 and p73/TP73 and stimulates their capacity to induce apoptosis and regulate cell cycle. In response to double-strand DNA breaks, promotes p53/TP53 phosphorylation on 'Ser-46' and subsequent apoptosis. Acts as a tumor suppressor by inducing cell death by an autophagy and caspase-dependent mechanism. Can reduce cell migration by regulating the expression of SPARC. The protein is Tumor protein p53-inducible nuclear protein 1 (Trp53inp1) of Mus musculus (Mouse).